A 335-amino-acid chain; its full sequence is N-lysine methyltransferase KMT5A-A (335 aa).

Disordered regions lie at residues 1–91 (MGRG…EVEK) and 133–183 (LPPE…EIES). A compositionally biased stretch (basic and acidic residues) spans 67 to 91 (SVTHHESKCLGKPSTETRKKAEVEK). The segment covering 145 to 161 (VKNKPLRKKTQRQKSPN) has biased composition (basic residues). In terms of domain architecture, SET spans 199–320 (EGIKMHMITG…VGEELLYDYG (122 aa)). S-adenosyl-L-methionine is bound by residues 209–211 (KGR), Tyr254, and 281–282 (NH).

This sequence belongs to the class V-like SAM-binding methyltransferase superfamily. Histone-lysine methyltransferase family. PR/SET subfamily.

Its subcellular location is the nucleus. It is found in the chromosome. It catalyses the reaction L-lysyl(20)-[histone H4] + S-adenosyl-L-methionine = N(6)-methyl-L-lysyl(20)-[histone H4] + S-adenosyl-L-homocysteine + H(+). It carries out the reaction L-lysyl-[protein] + S-adenosyl-L-methionine = N(6)-methyl-L-lysyl-[protein] + S-adenosyl-L-homocysteine + H(+). Its function is as follows. Protein-lysine N-methyltransferase that monomethylates both histones and non-histone proteins. Specifically monomethylates 'Lys-20' of histone H4 (H4K20me1). H4K20me1 is enriched during mitosis and represents a specific tag for epigenetic transcriptional repression. Mainly functions in euchromatin regions, thereby playing a central role in the silencing of euchromatic genes. Required for cell proliferation, probably by contributing to the maintenance of proper higher-order structure of DNA during mitosis. Involved in chromosome condensation and proper cytokinesis. This chain is N-lysine methyltransferase KMT5A-A, found in Xenopus laevis (African clawed frog).